The sequence spans 688 residues: Two-component response regulator ORR23 (688 aa).

Residues 25–140 (RVLAVDDDPV…ELRNIWQHVI (116 aa)) form the Response regulatory domain. The residue at position 76 (aspartate 76) is a 4-aspartylphosphate. A disordered region spans residues 161–212 (PPNADSDHVHGHVTCGSPDQSGRPSKKRKEYCSEEEDEGEVNTQDIDDPSAP). Acidic residues predominate over residues 193–208 (SEEEDEGEVNTQDIDD). A DNA-binding region (myb-like GARP) is located at residues 211 to 270 (APKKPRVVWSVELHRKFVAAVNQLGIDKAVPKRILELMNVEKLTRENVASHLQKYRLYLK).

Belongs to the ARR family. Type-B subfamily. Two-component system major event consists of a His-to-Asp phosphorelay between a sensor histidine kinase (HK) and a response regulator (RR). In plants, the His-to-Asp phosphorelay involves an additional intermediate named Histidine-containing phosphotransfer protein (HPt). This multistep phosphorelay consists of a His-Asp-His-Asp sequential transfer of a phosphate group between first a His and an Asp of the HK protein, followed by the transfer to a conserved His of the HPt protein and finally the transfer to an Asp in the receiver domain of the RR protein.

The protein localises to the nucleus. Transcriptional activator that binds specific DNA sequence. Functions as a response regulator involved in His-to-Asp phosphorelay signal transduction system. Phosphorylation of the Asp residue in the receiver domain activates the ability of the protein to promote the transcription of target genes. May directly activate some type-A response regulators in response to cytokinins. The polypeptide is Two-component response regulator ORR23 (Oryza sativa subsp. indica (Rice)).